The sequence spans 176 residues: NAD(P)H-quinone oxidoreductase subunit 6, chloroplastic (176 aa).

5 consecutive transmembrane segments (helical) span residues 10–30 (FLLV…VLFP), 32–52 (PIYS…FYIL), 61–81 (AQLL…VMFL), 105–125 (ISLF…GIIW), and 153–173 (FLPF…AIVI).

This sequence belongs to the complex I subunit 6 family. NDH is composed of at least 16 different subunits, 5 of which are encoded in the nucleus.

The protein localises to the plastid. Its subcellular location is the chloroplast thylakoid membrane. The enzyme catalyses a plastoquinone + NADH + (n+1) H(+)(in) = a plastoquinol + NAD(+) + n H(+)(out). It catalyses the reaction a plastoquinone + NADPH + (n+1) H(+)(in) = a plastoquinol + NADP(+) + n H(+)(out). NDH shuttles electrons from NAD(P)H:plastoquinone, via FMN and iron-sulfur (Fe-S) centers, to quinones in the photosynthetic chain and possibly in a chloroplast respiratory chain. The immediate electron acceptor for the enzyme in this species is believed to be plastoquinone. Couples the redox reaction to proton translocation, and thus conserves the redox energy in a proton gradient. This chain is NAD(P)H-quinone oxidoreductase subunit 6, chloroplastic (ndhG), found in Ipomoea purpurea (Common morning glory).